Reading from the N-terminus, the 269-residue chain is Hemin import ATP-binding protein HmuV (269 aa).

An ABC transporter domain is found at 5 to 242; that stretch reads LDAEAASFAI…SLIRRVFDIA (238 aa). Residue 37-44 coordinates ATP; the sequence is GPNGAGKS.

Belongs to the ABC transporter superfamily. Heme (hemin) importer (TC 3.A.1.14.5) family. The complex is composed of two ATP-binding proteins (HmuV), two transmembrane proteins (HmuU) and a solute-binding protein (HmuT).

The protein localises to the cell inner membrane. Its function is as follows. Part of the ABC transporter complex HmuTUV involved in hemin import. Responsible for energy coupling to the transport system. The sequence is that of Hemin import ATP-binding protein HmuV from Rhodopseudomonas palustris (strain BisB18).